Reading from the N-terminus, the 482-residue chain is UDP-N-acetylmuramate--L-alanine ligase (482 aa).

123–129 (GTHGKTT) contacts ATP.

The protein belongs to the MurCDEF family.

The protein resides in the cytoplasm. It catalyses the reaction UDP-N-acetyl-alpha-D-muramate + L-alanine + ATP = UDP-N-acetyl-alpha-D-muramoyl-L-alanine + ADP + phosphate + H(+). It participates in cell wall biogenesis; peptidoglycan biosynthesis. In terms of biological role, cell wall formation. In Pseudomonas putida (strain ATCC 47054 / DSM 6125 / CFBP 8728 / NCIMB 11950 / KT2440), this protein is UDP-N-acetylmuramate--L-alanine ligase.